A 533-amino-acid chain; its full sequence is Peptidyl-prolyl cis-trans isomerase-like 2 (533 aa).

Residues 38–111 (KRLPFYCCSL…DEYFCPVTYK (74 aa)) enclose the U-box domain. Residues 284-438 (KKSYARIITN…REIKIKQIQM (155 aa)) form the PPIase cyclophilin-type domain. Positions 443-519 (FEEYQRRLKN…SNEGEELQKK (77 aa)) form a coiled coil. The segment covering 454-477 (LTHEANAERENEEMRKRREKEEKM) has biased composition (basic and acidic residues). The interval 454–533 (LTHEANAERE…KTTFGNFDNF (80 aa)) is disordered. Residues 523 to 533 (TKTTFGNFDNF) are compositionally biased toward polar residues.

Belongs to the cyclophilin-type PPIase family. PPIL2 subfamily.

The protein resides in the nucleus. It catalyses the reaction [protein]-peptidylproline (omega=180) = [protein]-peptidylproline (omega=0). The enzyme catalyses S-ubiquitinyl-[E2 ubiquitin-conjugating enzyme]-L-cysteine + [acceptor protein]-L-lysine = [E2 ubiquitin-conjugating enzyme]-L-cysteine + N(6)-ubiquitinyl-[acceptor protein]-L-lysine.. It participates in protein modification; protein ubiquitination. May catalyze the cis-trans isomerization of proline imidic peptide bonds in oligopeptides thereby assisting the folding of proteins. May also function as a chaperone, playing a role in intracellular transport of proteins. May also have a protein ubiquitin ligase activity acting as an E3 ubiquitin protein ligase or as a ubiquitin-ubiquitin ligase promoting elongation of ubiquitin chains on proteins. The protein is Peptidyl-prolyl cis-trans isomerase-like 2 (cyp14) of Rhizopus delemar (strain RA 99-880 / ATCC MYA-4621 / FGSC 9543 / NRRL 43880) (Mucormycosis agent).